The sequence spans 300 residues: (R)-3-hydroxydecanoyl-ACP:CoA transacylase (300 aa).

Residues 29–253 enclose the AB hydrolase-1 domain; the sequence is TIILVNGSLS…HTIRNAGHFI (225 aa).

It functions in the pathway polyester biosynthesis; polyhydroxyalkanoate biosynthesis. Catalyzes the transfer of the acyl moiety from in vitro synthesized 3-hydroxydecanoyl-CoA to acyl carrier protein. The chain is (R)-3-hydroxydecanoyl-ACP:CoA transacylase (phaG) from Pseudomonas aeruginosa (strain ATCC 15692 / DSM 22644 / CIP 104116 / JCM 14847 / LMG 12228 / 1C / PRS 101 / PAO1).